Here is a 345-residue protein sequence, read N- to C-terminus: Biotin synthase (345 aa).

The 228-residue stretch at 39–266 folds into the Radical SAM core domain; sequence NEVQVSTLLS…ASHVRLSAGR (228 aa). [4Fe-4S] cluster is bound by residues C54, C58, and C61. Residues C98, C129, C189, and R261 each contribute to the [2Fe-2S] cluster site.

The protein belongs to the radical SAM superfamily. Biotin synthase family. Homodimer. It depends on [4Fe-4S] cluster as a cofactor. The cofactor is [2Fe-2S] cluster.

The enzyme catalyses (4R,5S)-dethiobiotin + (sulfur carrier)-SH + 2 reduced [2Fe-2S]-[ferredoxin] + 2 S-adenosyl-L-methionine = (sulfur carrier)-H + biotin + 2 5'-deoxyadenosine + 2 L-methionine + 2 oxidized [2Fe-2S]-[ferredoxin]. It participates in cofactor biosynthesis; biotin biosynthesis; biotin from 7,8-diaminononanoate: step 2/2. Catalyzes the conversion of dethiobiotin (DTB) to biotin by the insertion of a sulfur atom into dethiobiotin via a radical-based mechanism. In Idiomarina loihiensis (strain ATCC BAA-735 / DSM 15497 / L2-TR), this protein is Biotin synthase.